The sequence spans 307 residues: NAD(+) hydrolase TcpC (307 aa).

A helical membrane pass occupies residues 22-42 (YNILFFIFLSIAIPFLLFLAW). Positions 169–303 (THYDFFISHA…EIARELAEIA (135 aa)) constitute a TIR domain. NAD(+) is bound by residues 178–179 (AK) and Glu-208. Residue Glu-244 is part of the active site.

In terms of assembly, interacts with host MYD88. Interacts with host TLR4.

Its subcellular location is the secreted. The protein localises to the membrane. It catalyses the reaction NAD(+) + H2O = ADP-D-ribose + nicotinamide + H(+). The enzyme catalyses NADP(+) + H2O = ADP-D-ribose 2'-phosphate + nicotinamide + H(+). Functionally, virulence factor that suppresses host Toll-like receptor (TLR)-mediated cytokine production upon infection, thereby increasing bacterial burden in the urinary tract and promoting renal tissue damage. Acts as a NAD(+) hydrolase (NADase) by catalyzing cleavage of NAD(+) into ADP-D-ribose (ADPR) and nicotinamide. Also able to hydrolyze NADP(+), but not other NAD(+)-related molecules. The sequence is that of NAD(+) hydrolase TcpC from Escherichia coli O6:H1 (strain CFT073 / ATCC 700928 / UPEC).